A 38-amino-acid polypeptide reads, in one-letter code: uncharacterized protein (38 aa).

The helical transmembrane segment at 10–32 threads the bilayer; the sequence is FSLLWYFLVGGGKGEVCWRFLGI.

The protein resides in the membrane. This is an uncharacterized protein from Saccharomyces cerevisiae (strain ATCC 204508 / S288c) (Baker's yeast).